Here is an 80-residue protein sequence, read N- to C-terminus: KNGDLRAPYVEIFDARGCDAKNSQYTGPKSGDMNDDQCVKVSMAVPKVSEATAEKKRQEFLGFKETAINVPQIAGKTKKY.

Arg-16 lines the (2R,3E)-phycocyanobilin pocket. Mesobiliverdin-binding residues include Cys-18, Gln-24, Tyr-25, and Lys-40. The 15,16-dihydrobiliverdin site is built by Pro-71 and Ile-73.

It belongs to the phycoerythrin family. As to quaternary structure, heterotetramer of 2 different alpha chains and 2 identical beta chains which form 2 alpha-beta heterodimers within the heterotetramer. Post-translationally, contains one phycocyanobilin chromophore, one mesobiliverdin chromophore and one 15,16-dihydrobiliverdin chromophore with binding mediated by both the alpha and beta subunits.

It localises to the plastid. It is found in the chloroplast thylakoid membrane. Its function is as follows. Light-harvesting photosynthetic tetrapyrrole chromophore-protein from the phycobiliprotein complex. In Chroomonas sp, this protein is Phycocyanin-645 alpha-1 chain.